Consider the following 199-residue polypeptide: uncharacterized protein (199 aa).

Residues 21-38 (ISPSATNFIVSLVIMILI) form a helical membrane-spanning segment.

It localises to the membrane. This is an uncharacterized protein from Saccharomyces cerevisiae (strain ATCC 204508 / S288c) (Baker's yeast).